We begin with the raw amino-acid sequence, 459 residues long: Vasoactive intestinal polypeptide receptor 1 (459 aa).

A signal peptide spans 1–30 (MRPPSPPHVRWLCVLAGALACALRPAGSQA). At 31–142 (ASPQHECEYL…EQQQTKFYNT (112 aa)) the chain is on the extracellular side. Cystine bridges form between Cys37–Cys209, Cys50–Cys72, Cys63–Cys105, Cys86–Cys122, and Cys216–Cys286. N-linked (GlcNAc...) asparagine glycans are attached at residues Asn58, Asn69, and Asn100. A helical transmembrane segment spans residues 143-167 (VKTGYTIGYSLSLASLLVAMAILSL). Residues 168–175 (FRKLHCTR) lie on the Cytoplasmic side of the membrane. Residues 176 to 197 (NYIHMHLFMSFILRATAVFIKD) traverse the membrane as a helical segment. Residues 198 to 217 (MALFNSGEIDHCSEASVGCK) are Extracellular-facing. A helical membrane pass occupies residues 218-242 (AAVVFFQYCVMANFFWLLVEGLYLY). Topologically, residues 243–255 (TLLAVSFFSERKY) are cytoplasmic. Residues 256–277 (FWGYILIGWGVPSVFITIWTVV) traverse the membrane as a helical segment. Residues 278-293 (RIYFEDFGCWDTIINS) lie on the Extracellular side of the membrane. Asn292 carries N-linked (GlcNAc...) asparagine glycosylation. A helical transmembrane segment spans residues 294-318 (SLWWIIKAPILLSILVNFVLFICII). At 319 to 340 (RILVQKLRPPDIGKNDSSPYSR) the chain is on the cytoplasmic side. Residues 341–361 (LAKSTLLLIPLFGIHYVMFAF) traverse the membrane as a helical segment. Over 362-369 (FPDNFKAQ) the chain is Extracellular. The chain crosses the membrane as a helical span at residues 370–393 (VKMVFELVVGSFQGFVVAILYCFL). The Cytoplasmic portion of the chain corresponds to 394–459 (NGEVQAELRR…SSFQAEVSLV (66 aa)).

Belongs to the G-protein coupled receptor 2 family. In terms of assembly, interacts with ADCYAP1/PACAP; activated by both PACAP27 and PACAP38 neuropeptides. Interacts with VIP; the interaction results in VIPR1 activation. In liver, lung, intestines, thymus and brain (mostly in the cerebral cortex and hippocampus).

The protein localises to the cell membrane. G protein-coupled receptor activated by the neuropeptides vasoactive intestinal peptide (VIP) and pituitary adenylate cyclase-activating polypeptide (ADCYAP1/PACAP). Binds VIP and both PACAP27 and PACAP38 bioactive peptides with the following order of ligand affinity VIP = PACAP27 &gt; PACAP38. Ligand binding causes a conformation change that triggers signaling via guanine nucleotide-binding proteins (G proteins) and modulates the activity of downstream effectors. Activates cAMP-dependent pathway. In Rattus norvegicus (Rat), this protein is Vasoactive intestinal polypeptide receptor 1.